The following is a 449-amino-acid chain: Glutamyl-tRNA(Gln) amidotransferase subunit A (449 aa).

Residues K51 and S126 each act as charge relay system in the active site. Positions 103–128 are disordered; that stretch reads STTESSAHGKTLNPVDSSRVPGGSSG. Over residues 119 to 128 the composition is skewed to low complexity; that stretch reads SSRVPGGSSG. The Acyl-ester intermediate role is filled by S150.

Belongs to the amidase family. GatA subfamily. Heterotrimer of A, B and C subunits.

The enzyme catalyses L-glutamyl-tRNA(Gln) + L-glutamine + ATP + H2O = L-glutaminyl-tRNA(Gln) + L-glutamate + ADP + phosphate + H(+). In terms of biological role, allows the formation of correctly charged Gln-tRNA(Gln) through the transamidation of misacylated Glu-tRNA(Gln) in organisms which lack glutaminyl-tRNA synthetase. The reaction takes place in the presence of glutamine and ATP through an activated gamma-phospho-Glu-tRNA(Gln). In Wolinella succinogenes (strain ATCC 29543 / DSM 1740 / CCUG 13145 / JCM 31913 / LMG 7466 / NCTC 11488 / FDC 602W) (Vibrio succinogenes), this protein is Glutamyl-tRNA(Gln) amidotransferase subunit A.